The chain runs to 1016 residues: DNA polymerase I (1016 aa).

The 308-residue stretch at 1–308 (MPNSIWTSSD…MEFTTLTRRV (308 aa)) folds into the 5'-3' exonuclease domain. Residues 334–361 (GPDLDAAEPEPVAGGIPEVSGESVPMPP) are disordered. The 237-residue stretch at 394–630 (SAYVTIRDLV…MEARGITVDR (237 aa)) folds into the 3'-5' exonuclease domain. Residues 768-1016 (GRKIRTAFIS…RAATNWDEAH (249 aa)) form a polymerase region.

Belongs to the DNA polymerase type-A family. In terms of assembly, single-chain monomer with multiple functions.

The enzyme catalyses DNA(n) + a 2'-deoxyribonucleoside 5'-triphosphate = DNA(n+1) + diphosphate. In addition to polymerase activity, this DNA polymerase exhibits 3'-5' and 5'-3' exonuclease activity. The polypeptide is DNA polymerase I (polA) (Rhizobium leguminosarum).